Here is a 421-residue protein sequence, read N- to C-terminus: Granaticin polyketide putative beta-ketoacyl synthase 1 (421 aa).

One can recognise a Ketosynthase family 3 (KS3) domain in the interval 2-416; it reads TRRVVITGVG…GFQSAMVLHR (415 aa). Residues Cys169, His309, and His346 each act as for beta-ketoacyl synthase activity in the active site.

The protein belongs to the thiolase-like superfamily. Beta-ketoacyl-ACP synthases family.

The protein operates within antibiotic biosynthesis; granaticin biosynthesis. This is Granaticin polyketide putative beta-ketoacyl synthase 1 (gra-orf1) from Streptomyces violaceoruber.